We begin with the raw amino-acid sequence, 200 residues long: Inner membrane-spanning protein YciB (200 aa).

Helical transmembrane passes span phenylalanine 32–valine 52, valine 56–valine 76, leucine 93–phenylalanine 113, phenylalanine 126–tryptophan 146, and phenylalanine 153–glutamine 173.

It belongs to the YciB family.

It is found in the cell inner membrane. Its function is as follows. Plays a role in cell envelope biogenesis, maintenance of cell envelope integrity and membrane homeostasis. This Afipia carboxidovorans (strain ATCC 49405 / DSM 1227 / KCTC 32145 / OM5) (Oligotropha carboxidovorans) protein is Inner membrane-spanning protein YciB.